We begin with the raw amino-acid sequence, 404 residues long: Putative Peroxidase 48 (404 aa).

Positions 1-18 are cleaved as a signal peptide; sequence MRFLGDYKFALLTCSVIA. Disulfide bonds link Cys-77–Cys-156, Cys-110–Cys-115, Cys-162–Cys-397, and Cys-241–Cys-273. The active-site Proton acceptor is the His-108. 5 residues coordinate Ca(2+): Asp-109, Ile-112, Gly-114, Asp-116, and Ser-118. A glycan (N-linked (GlcNAc...) asparagine) is linked at Asn-136. Pro-204 contributes to the substrate binding site. His-234 is a heme b binding site. Ser-235 contacts Ca(2+). A glycan (N-linked (GlcNAc...) asparagine) is linked at Asn-250. Residues 276-307 form a disordered region; that stretch reads SVSTSSPSAPPDIGLPPSLPASDSENSYGMSS. The segment covering 283-294 has biased composition (pro residues); it reads SAPPDIGLPPSL. Asp-287 contributes to the Ca(2+) binding site. The segment covering 296-307 has biased composition (polar residues); the sequence is ASDSENSYGMSS.

The protein belongs to the peroxidase family. Classical plant (class III) peroxidase subfamily. Requires heme b as cofactor. Ca(2+) is required as a cofactor.

The protein resides in the secreted. It catalyses the reaction 2 a phenolic donor + H2O2 = 2 a phenolic radical donor + 2 H2O. Its function is as follows. Removal of H(2)O(2), oxidation of toxic reductants, biosynthesis and degradation of lignin, suberization, auxin catabolism, response to environmental stresses such as wounding, pathogen attack and oxidative stress. These functions might be dependent on each isozyme/isoform in each plant tissue. The chain is Putative Peroxidase 48 (PER48) from Arabidopsis thaliana (Mouse-ear cress).